The following is a 144-amino-acid chain: Bacilliredoxin BCE_4227 (144 aa).

Belongs to the bacilliredoxin family.

The chain is Bacilliredoxin BCE_4227 from Bacillus cereus (strain ATCC 10987 / NRS 248).